Here is a 108-residue protein sequence, read N- to C-terminus: Insulin (108 aa).

The signal sequence occupies residues M1–A23. Cystine bridges form between C30-C94 and C43-C107. Residues E57–A88 constitute a propeptide, c peptide.

This sequence belongs to the insulin family. In terms of assembly, heterodimer of a B chain and an A chain linked by two disulfide bonds.

The protein localises to the secreted. Insulin decreases blood glucose concentration. It increases cell permeability to monosaccharides, amino acids and fatty acids. It accelerates glycolysis, the pentose phosphate cycle, and glycogen synthesis in liver. This is Insulin (INS) from Rodentia sp.